The sequence spans 238 residues: tRNA1(Val) (adenine(37)-N6)-methyltransferase (238 aa).

The protein belongs to the methyltransferase superfamily. tRNA (adenine-N(6)-)-methyltransferase family.

The protein resides in the cytoplasm. It catalyses the reaction adenosine(37) in tRNA1(Val) + S-adenosyl-L-methionine = N(6)-methyladenosine(37) in tRNA1(Val) + S-adenosyl-L-homocysteine + H(+). Its function is as follows. Specifically methylates the adenine in position 37 of tRNA(1)(Val) (anticodon cmo5UAC). The protein is tRNA1(Val) (adenine(37)-N6)-methyltransferase of Shewanella sp. (strain W3-18-1).